The following is a 249-amino-acid chain: 5'-nucleotidase SurE (249 aa).

Positions 8, 9, 39, and 91 each coordinate a divalent metal cation.

Belongs to the SurE nucleotidase family. It depends on a divalent metal cation as a cofactor.

It is found in the cytoplasm. The enzyme catalyses a ribonucleoside 5'-phosphate + H2O = a ribonucleoside + phosphate. Nucleotidase that shows phosphatase activity on nucleoside 5'-monophosphates. The protein is 5'-nucleotidase SurE of Pseudomonas fluorescens (strain SBW25).